The following is a 310-amino-acid chain: Proline iminopeptidase (310 aa).

Residues 33-290 (PVIFLHGGPG…RVVQAGHCAF (258 aa)) form the AB hydrolase-1 domain. Residue Ser-107 is the Nucleophile of the active site. Asp-260 is a catalytic residue. His-287 functions as the Proton donor in the catalytic mechanism.

Belongs to the peptidase S33 family.

It localises to the cytoplasm. The catalysed reaction is Release of N-terminal proline from a peptide.. In terms of biological role, hydrolyzes peptides having the structure Pro-Y-Z to yield free proline. Also hydrolyzes the dipeptide Pro-Gly. The polypeptide is Proline iminopeptidase (pip) (Neisseria gonorrhoeae).